Here is a 622-residue protein sequence, read N- to C-terminus: MALLQISEPGQSPDPHQRRVAIGIDLGTTHSLVAAVRNGVAECLPDAQGRVLLPSVVRYLGGGGRQIGYEAAAAQMQDPANTVSSVKRFMGRGLGDITGREKLPYDFIAAADSGGMLSLSTAAGVKSPVEVSAEILATLRYRAEDSFDSDLYGAVITVPAYFDDAQRQATKDAAHLAGLNLLRLINEPTAAAIAYGLDNGAEGVYAVYDLGGGTFDISVLRLAQGVFEVIATGGDSALGGDDYDAALAEWVMQQTGVRASTPEDKTSVRLAARACKEALTATDNVAFTADVAGATVQFDVKREDFAAVTAELTQRSLAAVRRTLRDAQIERDEVKGVVLVGGSTRMPVVRAAVAEFFGREPLTNLNPDEVVAIGAAIQANQLAGNDAAGDLLLLDVIPLSLGIETMGGLVERIIGRNETIPTAKAQDFTTYKDGQTALAIHVVQGERDLVQDCRSLARFELRGIPPMAAGAARIRVTFTVDADGLLSVAAREQASGVEARIDVKPSYGLSDEQIARMLQEGFATAQQDMQTRALVEARVDADRLLIATQSALDVDGDVLAAAERTAIDDLMHALRATLETSTDAAAVEAAAQALAKGTEAFAAQRMNRGIRQALAGKNVSAL.

It belongs to the heat shock protein 70 family.

Chaperone involved in the maturation of iron-sulfur cluster-containing proteins. Has a low intrinsic ATPase activity which is markedly stimulated by HscB. The polypeptide is Chaperone protein HscA homolog (Acidovorax ebreus (strain TPSY) (Diaphorobacter sp. (strain TPSY))).